A 326-amino-acid chain; its full sequence is Phospho-N-acetylmuramoyl-pentapeptide-transferase (326 aa).

10 consecutive transmembrane segments (helical) span residues 2-22, 51-71, 73-93, 113-133, 143-163, 175-195, 199-219, 225-245, 250-270, and 305-325; these read ILATKVFFTSFVFGFILFPYF, VPPMGGIIILTSSLLPILLWV, LTPEILLLILITLFFALLGFI, ILIQFIVALVGVFILKLYSAE, GVIIDFGYLYVPFAAFVIVGS, GLAATQVITSFAFLGLIAYIT, MNITLFCIAFIGAILSFLWFN, IFMGDVGSLSVGAALGLTSVL, MLFAVIGIIFVIETLSVIIQI, and VIVMKFWIISIICSVFTITFL.

It belongs to the glycosyltransferase 4 family. MraY subfamily. Requires Mg(2+) as cofactor.

The protein resides in the cell membrane. The catalysed reaction is UDP-N-acetyl-alpha-D-muramoyl-L-alanyl-gamma-D-glutamyl-meso-2,6-diaminopimeloyl-D-alanyl-D-alanine + di-trans,octa-cis-undecaprenyl phosphate = di-trans,octa-cis-undecaprenyl diphospho-N-acetyl-alpha-D-muramoyl-L-alanyl-D-glutamyl-meso-2,6-diaminopimeloyl-D-alanyl-D-alanine + UMP. It functions in the pathway cell wall biogenesis; peptidoglycan biosynthesis. Functionally, catalyzes the initial step of the lipid cycle reactions in the biosynthesis of the cell wall peptidoglycan: transfers peptidoglycan precursor phospho-MurNAc-pentapeptide from UDP-MurNAc-pentapeptide onto the lipid carrier undecaprenyl phosphate, yielding undecaprenyl-pyrophosphoryl-MurNAc-pentapeptide, known as lipid I. This is Phospho-N-acetylmuramoyl-pentapeptide-transferase from Wolbachia sp. subsp. Drosophila simulans (strain wRi).